The sequence spans 255 residues: tRNA (adenine(58)-N(1))-methyltransferase TrmI (255 aa).

Residues 104 to 107, glutamate 125, histidine 130, glutamate 155, and aspartate 170 contribute to the S-adenosyl-L-methionine site; that span reads SGGL.

It belongs to the class I-like SAM-binding methyltransferase superfamily. TRM61 family. Homotetramer composed of a dimer of dimers.

It carries out the reaction adenosine(58) in tRNA + S-adenosyl-L-methionine = N(1)-methyladenosine(58) in tRNA + S-adenosyl-L-homocysteine + H(+). Catalyzes the S-adenosyl-L-methionine-dependent formation of N(1)-methyladenine at position 58 (m1A58) in tRNA. This chain is tRNA (adenine(58)-N(1))-methyltransferase TrmI (trmI), found in Thermus thermophilus (strain ATCC 27634 / DSM 579 / HB8).